Consider the following 290-residue polypeptide: 4-diphosphocytidyl-2-C-methyl-D-erythritol kinase (290 aa).

K8 is a catalytic residue. P89–S99 lines the ATP pocket. D131 is a catalytic residue.

This sequence belongs to the GHMP kinase family. IspE subfamily.

It catalyses the reaction 4-CDP-2-C-methyl-D-erythritol + ATP = 4-CDP-2-C-methyl-D-erythritol 2-phosphate + ADP + H(+). The protein operates within isoprenoid biosynthesis; isopentenyl diphosphate biosynthesis via DXP pathway; isopentenyl diphosphate from 1-deoxy-D-xylulose 5-phosphate: step 3/6. Functionally, catalyzes the phosphorylation of the position 2 hydroxy group of 4-diphosphocytidyl-2C-methyl-D-erythritol. The sequence is that of 4-diphosphocytidyl-2-C-methyl-D-erythritol kinase from Chlamydia felis (strain Fe/C-56) (Chlamydophila felis).